Reading from the N-terminus, the 103-residue chain is MIAKDKIRVRLFSFDVKILDQSAESIVKAVQKAKAQIKGPIPLPTKIKKYTVLRSPHVNKKSREQFEMRTHKRLIDILEPTSALMDSLMKLELPAGVEVDIKQ.

The protein belongs to the universal ribosomal protein uS10 family. In terms of assembly, part of the 30S ribosomal subunit.

Its function is as follows. Involved in the binding of tRNA to the ribosomes. This is Small ribosomal subunit protein uS10 from Borreliella burgdorferi (strain ATCC 35210 / DSM 4680 / CIP 102532 / B31) (Borrelia burgdorferi).